We begin with the raw amino-acid sequence, 328 residues long: tRNA dimethylallyltransferase (328 aa).

10 to 17 (GPTASGKT) contacts ATP. 12–17 (TASGKT) is a binding site for substrate.

The protein belongs to the IPP transferase family. In terms of assembly, monomer. Requires Mg(2+) as cofactor.

The enzyme catalyses adenosine(37) in tRNA + dimethylallyl diphosphate = N(6)-dimethylallyladenosine(37) in tRNA + diphosphate. In terms of biological role, catalyzes the transfer of a dimethylallyl group onto the adenine at position 37 in tRNAs that read codons beginning with uridine, leading to the formation of N6-(dimethylallyl)adenosine (i(6)A). In Bifidobacterium longum subsp. infantis (strain ATCC 15697 / DSM 20088 / JCM 1222 / NCTC 11817 / S12), this protein is tRNA dimethylallyltransferase.